The chain runs to 282 residues: Bifunctional protein FolD (282 aa).

NADP(+) contacts are provided by residues G165–S167 and S190.

This sequence belongs to the tetrahydrofolate dehydrogenase/cyclohydrolase family. In terms of assembly, homodimer.

The enzyme catalyses (6R)-5,10-methylene-5,6,7,8-tetrahydrofolate + NADP(+) = (6R)-5,10-methenyltetrahydrofolate + NADPH. It carries out the reaction (6R)-5,10-methenyltetrahydrofolate + H2O = (6R)-10-formyltetrahydrofolate + H(+). Its pathway is one-carbon metabolism; tetrahydrofolate interconversion. Its function is as follows. Catalyzes the oxidation of 5,10-methylenetetrahydrofolate to 5,10-methenyltetrahydrofolate and then the hydrolysis of 5,10-methenyltetrahydrofolate to 10-formyltetrahydrofolate. This Macrococcus caseolyticus (strain JCSC5402) (Macrococcoides caseolyticum) protein is Bifunctional protein FolD.